The primary structure comprises 572 residues: MRTSQYLLSTLKETPADAEVISHQLMLRAGMIRKLASGLYTWLPTGVRVLKKVENIVREEMNNAGAIEVSMPVVQPADLWQESGRWEQYGPELLRFVDRGERPFVLGPTHEEVITDLIRNELSSYKQLPLNFYQIQTKFRDEVRPRFGVMRSREFLMKDAYSFHTSQESLQETYDAMYAAYSKIFSRMGLDFRAVQADTGSIGGSASHEFQVLAQSGEDDVVFSDTSDYAANIELAEAIAPKEPRAAATQEMTLVDTPNAKTIAELVEQFNLPIKKTVKTLLVKAVEGSSFPLVALLVRGDHELNEVKAEKLPQVASPLTFATEEEIRAVVKAGPGSLGPVNMPIPVVIDRTVAAMSDFTAGANIDGKHYFGINWDRDVATPEVADIRNVVAGDPSPDGQGTLLIKRGIEVGHIFQLGTKYSEALKASVQGEDGRNQILTMGCYGIGVTRVVAAAIEQNYDERGIVWPDAIAPFQVAILPMNMHKSFRVQELAEKLYSELRAQGIEVLLDDRKERPGVMFADMELIGIPHTIVLGDRNLDNDDIEYKYRRNGEKQLIKTGDIVEYLVKQIKG.

Belongs to the class-II aminoacyl-tRNA synthetase family. ProS type 1 subfamily. Homodimer.

Its subcellular location is the cytoplasm. It carries out the reaction tRNA(Pro) + L-proline + ATP = L-prolyl-tRNA(Pro) + AMP + diphosphate. Catalyzes the attachment of proline to tRNA(Pro) in a two-step reaction: proline is first activated by ATP to form Pro-AMP and then transferred to the acceptor end of tRNA(Pro). As ProRS can inadvertently accommodate and process non-cognate amino acids such as alanine and cysteine, to avoid such errors it has two additional distinct editing activities against alanine. One activity is designated as 'pretransfer' editing and involves the tRNA(Pro)-independent hydrolysis of activated Ala-AMP. The other activity is designated 'posttransfer' editing and involves deacylation of mischarged Ala-tRNA(Pro). The misacylated Cys-tRNA(Pro) is not edited by ProRS. This Escherichia coli O157:H7 protein is Proline--tRNA ligase.